Reading from the N-terminus, the 93-residue chain is Small ribosomal subunit protein uS19 (93 aa).

It belongs to the universal ribosomal protein uS19 family.

Functionally, protein S19 forms a complex with S13 that binds strongly to the 16S ribosomal RNA. The polypeptide is Small ribosomal subunit protein uS19 (Streptococcus gordonii (strain Challis / ATCC 35105 / BCRC 15272 / CH1 / DL1 / V288)).